Here is a 1050-residue protein sequence, read N- to C-terminus: Transcription intermediary factor 1-alpha (1050 aa).

Residue K7 forms a Glycyl lysine isopeptide (Lys-Gly) (interchain with G-Cter in SUMO2) linkage. Positions 15-30 (ASAAASGGPSAAPSGE) are enriched in low complexity. Residues 15-44 (ASAAASGGPSAAPSGENEAESRQGPDSERG) form a disordered region. The segment covering 33 to 44 (AESRQGPDSERG) has biased composition (basic and acidic residues). The segment at 56–82 (CAVCHQNIQSRAPKLLPCLHSFCQRCL) adopts an RING-type zinc-finger fold. T101 is modified (phosphothreonine). A Phosphoserine modification is found at S110. 2 consecutive B box-type zinc fingers follow at residues 158 to 211 (KSNQ…VSPE) and 218 to 259 (QRPV…YQFI). C163, C166, C187, and H200 together coordinate Zn(2+). A Glycyl lysine isopeptide (Lys-Gly) (interchain with G-Cter in SUMO2) cross-link involves residue K205. The Zn(2+) site is built by C223, H226, C246, and H251. K276 is covalently cross-linked (Glycyl lysine isopeptide (Lys-Gly) (interchain with G-Cter in SUMO2)). Residues 289–359 (NQIQNRIIEV…AGLSKQLEHV (71 aa)) adopt a coiled-coil conformation. Residues 429–456 (ESQPQMPKQNPVVEQNSQPPSGLSSNQL) are disordered. Polar residues predominate over residues 431–456 (QPQMPKQNPVVEQNSQPPSGLSSNQL). Residues K436 and K458 each participate in a glycyl lysine isopeptide (Lys-Gly) (interchain with G-Cter in SUMO2) cross-link. R469 carries the omega-N-methylarginine modification. Low complexity-rich tracts occupy residues 476-490 (QVMA…RPAP) and 499-510 (QGPIQQPSISHQ). A disordered region spans residues 476 to 550 (QVMAQRQQVQ…PPNQNIPRQA (75 aa)). Over residues 526–535 (PNGPVLPPHP) the composition is skewed to pro residues. K552 is covalently cross-linked (Glycyl lysine isopeptide (Lys-Gly) (interchain with G-Cter in SUMO2)). The segment at 571–594 (ISSGQGTPSTTNSTSSTPSSPTIT) is disordered. The segment covering 577-594 (TPSTTNSTSSTPSSPTIT) has biased composition (low complexity). K641 is covalently cross-linked (Glycyl lysine isopeptide (Lys-Gly) (interchain with G-Cter in SUMO2)). The segment at 643-712 (TNIDHGQPRP…PAGADSTHKV (70 aa)) is disordered. S654, S660, and S667 each carry phosphoserine. Positions 654 to 666 (SNRTVQSPNSSVP) are enriched in polar residues. Residues 685–707 (SPSASSVGSRGSSGSSSKPAGAD) show a composition bias toward low complexity. Residues K702 and K711 each participate in a glycyl lysine isopeptide (Lys-Gly) (interchain with G-Cter in SUMO2) cross-link. Residue K723 forms a Glycyl lysine isopeptide (Lys-Gly) (interchain with G-Cter in SUMO1); alternate linkage. K723 is covalently cross-linked (Glycyl lysine isopeptide (Lys-Gly) (interchain with G-Cter in SUMO2); alternate). Residue K741 forms a Glycyl lysine isopeptide (Lys-Gly) (interchain with G-Cter in SUMO2) linkage. Phosphoserine is present on S744. The nuclear receptor binding site (NRBS) stretch occupies residues 754–779 (NYPRSILTSLLLNSSQSSTSEETVLR). A disordered region spans residues 766–824 (NSSQSSTSEETVLRSDAPDSTGDQPGLHQDNSSNGKSEWLDPSQKSPLHVGETRKEDDP). Residue S768 is modified to Phosphoserine; by ATM. Residue K801 forms a Glycyl lysine isopeptide (Lys-Gly) (interchain with G-Cter in SUMO2) linkage. S808 is modified (phosphoserine). A Glycyl lysine isopeptide (Lys-Gly) (interchain with G-Cter in SUMO2) cross-link involves residue K810. S811 carries the phosphoserine modification. T818 carries the phosphothreonine modification. Residues 826–873 (EDWCAVCQNGGELLCCEKCPKVFHLSCHVPTLTNFPSGEWICTFCRDL) form a PHD-type zinc finger. Residues 834-840 (NGGELLC) are interaction with histone H3 that is not methylated at 'Lys-4' (H3K4me0). K875 participates in a covalent cross-link: Glycyl lysine isopeptide (Lys-Gly) (interchain with G-Cter in SUMO2). Positions 891–907 (KKKTEGLVKLTPIDKRK) match the Nuclear localization signal motif. The Bromo domain maps to 899 to 1004 (KLTPIDKRKC…NYFEELLKNL (106 aa)). Residue K949 forms a Glycyl lysine isopeptide (Lys-Gly) (interchain with G-Cter in SUMO2) linkage. Positions 979-980 (FN) are interaction with histone H3 that is acetylated at 'Lys-23' (H3K23ac). K992 is covalently cross-linked (Glycyl lysine isopeptide (Lys-Gly) (interchain with G-Cter in SUMO2)). Over residues 1011–1026 (PKPEFRNESEDNKFSD) the composition is skewed to basic and acidic residues. Residues 1011 to 1036 (PKPEFRNESEDNKFSDDSDDDFVQPR) form a disordered region. Residues S1019, S1025, and S1028 each carry the phosphoserine modification. A Glycyl lysine isopeptide (Lys-Gly) (interchain with G-Cter in SUMO2) cross-link involves residue K1041. S1042 carries the post-translational modification Phosphoserine.

In terms of assembly, interacts with CARM1, NCOA2/GRIP1, PML, KAT5/TIP60, BRD7, CBX1, CBX3 and CBX5. Part of a coactivator complex containing TRIM24, NCOA2 and CARM1. Interacts with NR3C2/MCR. Interacts with the ligand-binding domain of estrogen receptors (in vitro). Interaction with DNA-bound estrogen receptors requires the presence of estradiol. Interacts with AR and p53/TP53. Interacts (via bromo domain) with histone H3 (via N-terminus), provided that it is not methylated at 'Lys-4' (H3K4me0). Does not interact with histone H3 that is methylated at 'Lys-4' (H3K4me1, H3K4me2 or H3K4me3). Interacts (via bromo domain) with histone H3 (via N-terminus) that is acetylated at 'Lys-23' (H3K23ac). Has the highest affinity for histone H3 that is both unmodified at 'Lys-4' (H3K4me0) and acetylated at 'Lys-23' (H3K23ac). Has very low affinity for histone H3 that is methylated at 'Lys-9' (H3K9me), or acetylated at both 'Lys-9' (H3K9ac) and 'Lys-14' (H3K14ac), or acetylated at 'Lys-27' (H3K27ac) (in vitro). Interacts with TRIM16. In terms of processing, phosphorylated at Ser-768 by ATM kinase induces ubiquitination and degradation during DNA damage. Post-translationally, sumoylated. Undergoes ubiquitination-mediated degradation in response to DNA damage.

It localises to the nucleus. It is found in the cytoplasm. The protein resides in the mitochondrion. The catalysed reaction is S-ubiquitinyl-[E2 ubiquitin-conjugating enzyme]-L-cysteine + [acceptor protein]-L-lysine = [E2 ubiquitin-conjugating enzyme]-L-cysteine + N(6)-ubiquitinyl-[acceptor protein]-L-lysine.. It participates in protein modification; protein ubiquitination. In terms of biological role, transcriptional coactivator that interacts with numerous nuclear receptors and coactivators and modulates the transcription of target genes. Interacts with chromatin depending on histone H3 modifications, having the highest affinity for histone H3 that is both unmodified at 'Lys-4' (H3K4me0) and acetylated at 'Lys-23' (H3K23ac). Has E3 protein-ubiquitin ligase activity. During the DNA damage response, participates in an autoregulatory feedback loop with TP53. Early in response to DNA damage, ATM kinase phosphorylates TRIM24 leading to its ubiquitination and degradation. After sufficient DNA repair has occurred, TP53 activates TRIM24 transcription, ultimately leading to TRIM24-mediated TP53 ubiquitination and degradation. Plays a role in the regulation of cell proliferation and apoptosis, at least in part via its effects on p53/TP53 levels. Up-regulates ligand-dependent transcription activation by AR, GCR/NR3C1, thyroid hormone receptor (TR) and ESR1. Modulates transcription activation by retinoic acid (RA) receptors, including RARA. Plays a role in regulating retinoic acid-dependent proliferation of hepatocytes. Also participates in innate immunity by mediating the specific 'Lys-63'-linked ubiquitination of TRAF3 leading to activation of downstream signal transduction of the type I IFN pathway. Additionally, negatively regulates NLRP3/CASP1/IL-1beta-mediated pyroptosis and cell migration probably by ubiquitinating NLRP3. The protein is Transcription intermediary factor 1-alpha (TRIM24) of Homo sapiens (Human).